The chain runs to 336 residues: Meiotically up-regulated gene 33 protein (336 aa).

The disordered stretch occupies residues 232 to 336 (ISEDDGLKRG…KPSRFSWGRS (105 aa)). The segment covering 250–262 (TFSNDSRSLSSYA) has biased composition (polar residues).

The protein localises to the cytoplasm. Functionally, has a role in meiosis. The chain is Meiotically up-regulated gene 33 protein (mug33) from Schizosaccharomyces pombe (strain 972 / ATCC 24843) (Fission yeast).